A 167-amino-acid polypeptide reads, in one-letter code: Small ribosomal subunit protein uS9 (167 aa).

Disordered regions lie at residues 1-45 (MSEY…GGAT) and 137-167 (KAGF…FSKR). Residues 9–19 (DTVEDITESDE) show a composition bias toward acidic residues. The segment covering 20-36 (FTGTYTSESSTPATGGN) has biased composition (polar residues). The segment covering 143–152 (RDPRATERKK) has biased composition (basic and acidic residues). Residues 153-167 (AGLKKARKAPQFSKR) are compositionally biased toward basic residues.

It belongs to the universal ribosomal protein uS9 family.

This Kineococcus radiotolerans (strain ATCC BAA-149 / DSM 14245 / SRS30216) protein is Small ribosomal subunit protein uS9.